The following is a 245-amino-acid chain: E3 ubiquitin-protein ligase RNF138 (245 aa).

The RING-type zinc-finger motif lies at 18-58 (CPVCQEVLKTPVRTAACQHVFCRKCFLTAMRESGIHCPLCR). Residues Cys-86, Cys-89, His-101, and Cys-105 each contribute to the Zn(2+) site. The segment at 86-105 (CRCCSKKIKFYRMRHHYKSC) adopts a C2HC RNF-type zinc-finger fold. Residues 128 to 154 (VRSSNRSETSASDNTETYQEDTSSSGH) are disordered. Position 142 is a phosphothreonine (Thr-142). 2 C2H2-type zinc fingers span residues 157–180 (FKCPLCQESNFTRQRLLDHCNSNH) and 187–215 (VTCPICVSLPWGDPSQITRNFVSHLNQRH). A UIM domain is found at 225-243 (LQLDEETQYQTAVEESFQV).

In terms of assembly, interacts with NLK. Interacts with XRCC5/Ku80. Interacts with RBBP8/CtIP. Auto-ubiquitinated.

It is found in the chromosome. It catalyses the reaction S-ubiquitinyl-[E2 ubiquitin-conjugating enzyme]-L-cysteine + [acceptor protein]-L-lysine = [E2 ubiquitin-conjugating enzyme]-L-cysteine + N(6)-ubiquitinyl-[acceptor protein]-L-lysine.. It functions in the pathway protein modification; protein ubiquitination. Its function is as follows. E3 ubiquitin-protein ligase involved in DNA damage response by promoting DNA resection and homologous recombination. Recruited to sites of double-strand breaks following DNA damage and specifically promotes double-strand break repair via homologous recombination. Two different, non-exclusive, mechanisms have been proposed. According to a report, regulates the choice of double-strand break repair by favoring homologous recombination over non-homologous end joining (NHEJ): acts by mediating ubiquitination of XRCC5/Ku80, leading to remove the Ku complex from DNA breaks, thereby promoting homologous recombination. According to another report, cooperates with UBE2Ds E2 ubiquitin ligases (UBE2D1, UBE2D2, UBE2D3 or UBE2D4) to promote homologous recombination by mediating ubiquitination of RBBP8/CtIP. Together with NLK, involved in the ubiquitination and degradation of TCF/LEF. Also exhibits auto-ubiquitination activity in combination with UBE2K. May act as a negative regulator in the Wnt/beta-catenin-mediated signaling pathway. This chain is E3 ubiquitin-protein ligase RNF138, found in Mus musculus (Mouse).